The sequence spans 349 residues: Microfibril-associated glycoprotein 3 (349 aa).

Positions 1–21 are cleaved as a signal peptide; it reads MKLHHCLSFLLVVTLVPAALS. Residues 22 to 139 are Extracellular-facing; sequence LEDVAPLGAN…TLRVIFTSGD (118 aa). N-linked (GlcNAc...) asparagine glycosylation is found at N31, N36, N63, and N103. Residues 41–130 form the Ig-like C2-type domain; the sequence is PSFELSAGSY…SPARASYSVT (90 aa). Cysteines 68 and 117 form a disulfide. The helical transmembrane segment at 140 to 160 threads the bilayer; it reads MSVYYMVVCLIAFTITLILNV. Residues 161–349 are Cytoplasmic-facing; it reads TRLCLMSTHL…EGSIHHRVSI (189 aa). The disordered stretch occupies residues 280 to 349; it reads NPELGRSNSP…EGSIHHRVSI (70 aa). A compositionally biased stretch (polar residues) spans 311–331; it reads VHLQSETKSIGTDSQDSSHFS.

Post-translationally, glycosylated.

The protein localises to the cell membrane. Component of the elastin-associated microfibrils. This chain is Microfibril-associated glycoprotein 3 (Mfap3), found in Mus musculus (Mouse).